The primary structure comprises 260 residues: Collagenase (260 aa).

The first 16 residues, Met-1–Ala-16, serve as a signal peptide directing secretion. A propeptide spanning residues Phe-17–Arg-30 is cleaved from the precursor. Residues Ile-31–Gly-257 enclose the Peptidase S1 domain. A disulfide bond links Cys-60 and Cys-76. Active-site charge relay system residues include His-75 and Asp-118. Disulfide bonds link Cys-181/Cys-196 and Cys-206/Cys-234. Catalysis depends on Ser-210, which acts as the Charge relay system.

Belongs to the peptidase S1 family.

It is found in the secreted. The enzyme catalyses Hydrolysis of proteins including native collagen at Xaa-|-Ala bond leaving an N-terminal (75%) and a C-terminal (25%) fragment.. With respect to regulation, inhibited by diisopropylfluorophosphate. This enzyme is a serine protease capable of degrading the native triple helix of collagen. Also cleaves the B chain of insulin at the 15-Leu-|-Try-16 and 22-Arg-|-Gly-23 bonds. Hydrolyzes casein, but not Px-Pro-Leu-Gly-Pro-DArg, BzArgNHPh, AcTyrNHPh, 2-naphthyl phosphate, 2-naphthyl butyrate, 2-naphthyl caprylate, 2-naphthyl myristate, L-leucine 2-2-naphthylamide, L-valine 2-naphthylamide, L-cysteine 2-naphthylamide or L-glutarylphenylalanine 2-naphthylamide. In Hypoderma lineatum (Early cattle grub), this protein is Collagenase.